The primary structure comprises 366 residues: CRS2-associated factor 2, mitochondrial (366 aa).

The transit peptide at 1–14 (MLLPRDLLLLPWRR) directs the protein to the mitochondrion. The disordered stretch occupies residues 24 to 82 (RRLNHHRAPPFSDPDDDPPFTRLAERPPRAPSKKKKKEEEDQGGRIRPPEPASSDLPFD). The segment covering 60-71 (KEEEDQGGRIRP) has biased composition (basic and acidic residues). CRM domains lie at 143 to 241 (EPLA…QRPQ) and 263 to 359 (DGLT…SVSL).

Part of large ribonucleo-protein complexes that include group IIB introns.

It is found in the mitochondrion. Its function is as follows. May be involved in the splicing of group IIB introns in mitochondria. The sequence is that of CRS2-associated factor 2, mitochondrial from Oryza sativa subsp. japonica (Rice).